Reading from the N-terminus, the 404-residue chain is MNQALPNSFRSGPDERGHFGIYGGRFVAETLMPLILDLEKAYAEAKADPAFRAEMDNHLKHYVGRPSALYFAERLTEHFGGAKIYFKREDLNHTGAHKVNNVLGQIMLAKRMGKPRVIAETGAGMHGVATATMCAKFGLECVVFMGAVDVERQQPNVLRMKALGAEVRPVTSGANTLKDAMNEALRDWVTNVHDTFYCIGTVAGPHPYPMMVRDFQAVIGQEVREQIMQAEGRLPDSLVACIGGGSNAMGLFHPFLDDPGVAIYGVEAAGHGLDKLHAASIAGGKPGVLHGNRTYLLMDADGQIEEAHSISAGLDYPGVGPEHSWLHDVGRVNFLSATDTEALDAFKLCCRLEGIIPALEPSHALAKVADLAPKLPKDHLMVVNMSGRGDKDLASVAEHLGGKF.

Position 98 is an N6-(pyridoxal phosphate)lysine (K98).

The protein belongs to the TrpB family. In terms of assembly, tetramer of two alpha and two beta chains. The cofactor is pyridoxal 5'-phosphate.

It carries out the reaction (1S,2R)-1-C-(indol-3-yl)glycerol 3-phosphate + L-serine = D-glyceraldehyde 3-phosphate + L-tryptophan + H2O. Its pathway is amino-acid biosynthesis; L-tryptophan biosynthesis; L-tryptophan from chorismate: step 5/5. Functionally, the beta subunit is responsible for the synthesis of L-tryptophan from indole and L-serine. In Rhodopseudomonas palustris (strain ATCC BAA-98 / CGA009), this protein is Tryptophan synthase beta chain.